We begin with the raw amino-acid sequence, 148 residues long: Deoxyuridine 5'-triphosphate nucleotidohydrolase (148 aa).

Residues 67-69, N80, 84-86, and M94 contribute to the substrate site; these read RSG and LID.

It belongs to the dUTPase family. Mg(2+) is required as a cofactor.

The catalysed reaction is dUTP + H2O = dUMP + diphosphate + H(+). It functions in the pathway pyrimidine metabolism; dUMP biosynthesis; dUMP from dCTP (dUTP route): step 2/2. This enzyme is involved in nucleotide metabolism: it produces dUMP, the immediate precursor of thymidine nucleotides and it decreases the intracellular concentration of dUTP so that uracil cannot be incorporated into DNA. In Francisella tularensis subsp. tularensis (strain FSC 198), this protein is Deoxyuridine 5'-triphosphate nucleotidohydrolase.